Here is a 1787-residue protein sequence, read N- to C-terminus: Chromodomain-helicase-DNA-binding protein 3 homolog (1787 aa).

Disordered stretches follow at residues Met-1–Tyr-80 and Pro-170–Gly-258. Positions Asp-10–Glu-43 are enriched in acidic residues. A compositionally biased stretch (basic residues) spans Pro-56 to Lys-71. The segment covering Asp-192–Ala-243 has biased composition (basic and acidic residues). 2 consecutive PHD-type zinc fingers follow at residues Gln-265–His-312 and Met-328–Pro-375. Chromo domains follow at residues Ile-373–Ser-476 and Met-501–Glu-583. Residues Arg-628–Asp-812 form the Helicase ATP-binding domain. Asp-641 to Thr-648 contacts ATP. A DEAH box motif is present at residues Asp-763–His-766. One can recognise a Helicase C-terminal domain in the interval Leu-944–Asp-1107. Disordered regions lie at residues Glu-1120–Gln-1141, Thr-1186–Asn-1212, Glu-1248–Ser-1295, and Arg-1754–Tyr-1787. Acidic residues predominate over residues Asp-1190–Thr-1199. The segment covering Glu-1248–Gln-1261 has biased composition (polar residues). A compositionally biased stretch (basic and acidic residues) spans Thr-1761–Ile-1773.

Belongs to the SNF2/RAD54 helicase family. In terms of tissue distribution, expressed in the head and vulva.

It localises to the nucleus. The enzyme catalyses ATP + H2O = ADP + phosphate + H(+). ATP-dependent chromatin-remodeling factor that has a role in notch signaling-dependent vulval cell fate determination. May also have a role in pharyngeal precursor cell specification. The protein is Chromodomain-helicase-DNA-binding protein 3 homolog (chd-3) of Caenorhabditis elegans.